We begin with the raw amino-acid sequence, 68 residues long: MPQLNTTVWPTIITSMLLTLFLLMQLKTLNMYYHPPASPKLMNIKPHNNPWEHKWTKIYSLHSLPLQS.

The helical transmembrane segment at 8 to 24 (VWPTIITSMLLTLFLLM) threads the bilayer. The residue at position 54 (lysine 54) is an N6-acetyllysine; alternate. Lysine 54 carries the post-translational modification N6-succinyllysine; alternate. Lysine 57 is modified (N6-acetyllysine).

This sequence belongs to the ATPase protein 8 family. Component of the ATP synthase complex composed at least of ATP5F1A/subunit alpha, ATP5F1B/subunit beta, ATP5MC1/subunit c (homooctomer), MT-ATP6/subunit a, MT-ATP8/subunit 8, ATP5ME/subunit e, ATP5MF/subunit f, ATP5MG/subunit g, ATP5MK/subunit k, ATP5MJ/subunit j, ATP5F1C/subunit gamma, ATP5F1D/subunit delta, ATP5F1E/subunit epsilon, ATP5PF/subunit F6, ATP5PB/subunit b, ATP5PD/subunit d, ATP5PO/subunit OSCP. ATP synthase complex consists of a soluble F(1) head domain (subunits alpha(3) and beta(3)) - the catalytic core - and a membrane F(0) domain - the membrane proton channel (subunits c, a, 8, e, f, g, k and j). These two domains are linked by a central stalk (subunits gamma, delta, and epsilon) rotating inside the F1 region and a stationary peripheral stalk (subunits F6, b, d, and OSCP). Interacts with PRICKLE3.

Its subcellular location is the mitochondrion membrane. Subunit 8, of the mitochondrial membrane ATP synthase complex (F(1)F(0) ATP synthase or Complex V) that produces ATP from ADP in the presence of a proton gradient across the membrane which is generated by electron transport complexes of the respiratory chain. ATP synthase complex consist of a soluble F(1) head domain - the catalytic core - and a membrane F(1) domain - the membrane proton channel. These two domains are linked by a central stalk rotating inside the F(1) region and a stationary peripheral stalk. During catalysis, ATP synthesis in the catalytic domain of F(1) is coupled via a rotary mechanism of the central stalk subunits to proton translocation. In vivo, can only synthesize ATP although its ATP hydrolase activity can be activated artificially in vitro. Part of the complex F(0) domain. In Symphalangus syndactylus (Siamang), this protein is ATP synthase F(0) complex subunit 8.